The primary structure comprises 490 residues: Alpha-galactosidase (490 aa).

NAD(+) is bound at residue 4–70; sequence FKIAIIGAGS…LPTRVTATTD (67 aa). A substrate-binding site is contributed by N150. C171 provides a ligand contact to Mn(2+). H172 serves as the catalytic Proton donor. Residue H201 coordinates Mn(2+). Residue Y258 is the Proton acceptor of the active site.

It belongs to the glycosyl hydrolase 4 family. In terms of assembly, homodimer. The cofactor is Mn(2+). NAD(+) is required as a cofactor.

It carries out the reaction Hydrolysis of terminal, non-reducing alpha-D-galactose residues in alpha-D-galactosides, including galactose oligosaccharides, galactomannans and galactolipids.. The sequence is that of Alpha-galactosidase (melA) from Rhizobium meliloti (strain 1021) (Ensifer meliloti).